Consider the following 377-residue polypeptide: UPF0754 membrane protein BPUM_0927 (377 aa).

2 helical membrane-spanning segments follow: residues 1 to 21 and 357 to 377; these read MNIF…GAAT and FLGG…VTLF.

The protein belongs to the UPF0754 family.

It is found in the cell membrane. The chain is UPF0754 membrane protein BPUM_0927 from Bacillus pumilus (strain SAFR-032).